Here is a 177-residue protein sequence, read N- to C-terminus: MPIKSRIRTVPDYPKKGIMFRDITTLIKDPVGFRLVIDNMTQHYLSNGIDFDVIVGIEARGFIIGGALSYTLGKGFVPVRKPGKLPADVVQLEYDLEYGSDKIEMHTDSLVKGQRVLLVDDLLATGGTALAAAALVEKLGGVVASMGFIVNLPDVGGEKKIRDKGYNIFSLTEFEGD.

Belongs to the purine/pyrimidine phosphoribosyltransferase family. Homodimer.

It localises to the cytoplasm. The catalysed reaction is AMP + diphosphate = 5-phospho-alpha-D-ribose 1-diphosphate + adenine. It functions in the pathway purine metabolism; AMP biosynthesis via salvage pathway; AMP from adenine: step 1/1. Functionally, catalyzes a salvage reaction resulting in the formation of AMP, that is energically less costly than de novo synthesis. In Chlorobaculum parvum (strain DSM 263 / NCIMB 8327) (Chlorobium vibrioforme subsp. thiosulfatophilum), this protein is Adenine phosphoribosyltransferase.